The primary structure comprises 343 residues: MIKVGIVGGSGYGAIELIRLLQTHPHVTIAHIYSHSKVDEPLKLTFPHLQHIMQHFEALTVDNNDCDVIFFATPAPVSKTCIPPLVEKGIHVIDLSGAFRIKNREIYEAYYKETAAAQDDLNHAIYSISEWQSLDNNGTKLISNPGCFPTATLLALHPLISEKIVDLSSIIIDAKTGVSGAGRSLSQRVHFSEMNENLSAYAIGNHKHKPEIEQYLSIIAGQDVSVIFTPHLVPMARGILSTIYVKLSSEYTTESLHKLMTSYYANQPFVRIRDIGTFPTTKEVLGSNYCDIGIYVDETTQTAILVSVIDNLVKGASGQAIQNLNILYDFEVTTGLKQSPVYP.

The active site involves Cys-147.

It belongs to the NAGSA dehydrogenase family. Type 1 subfamily.

It localises to the cytoplasm. The enzyme catalyses N-acetyl-L-glutamate 5-semialdehyde + phosphate + NADP(+) = N-acetyl-L-glutamyl 5-phosphate + NADPH + H(+). It participates in amino-acid biosynthesis; L-arginine biosynthesis; N(2)-acetyl-L-ornithine from L-glutamate: step 3/4. Functionally, catalyzes the NADPH-dependent reduction of N-acetyl-5-glutamyl phosphate to yield N-acetyl-L-glutamate 5-semialdehyde. The chain is N-acetyl-gamma-glutamyl-phosphate reductase from Staphylococcus aureus (strain MRSA252).